A 95-amino-acid polypeptide reads, in one-letter code: RING finger protein Z (95 aa).

The span at 1-16 shows a compositional bias: low complexity; sequence MGNSKSKSNPSSSSES. The interval 1–23 is disordered; the sequence is MGNSKSKSNPSSSSESQKGAPTV. G2 carries the N-myristoyl glycine; by host lipid modification. The RING-type; atypical zinc-finger motif lies at 40–76; sequence CKCCWFADKNLIKCSDHYLCLRCLNVMLKNSDLCNIC. A PTAP/PSAP motif motif is present at residues 90–93; that stretch reads PSAP.

The protein belongs to the arenaviridae Z protein family. In terms of assembly, interacts with protein NP; this interaction probably directs the encapsidated genome to budding sites. Interacts (via RING domain) with polymerase L; this interaction inhibits viral transcription and replication, Z partially blocks the product exit tunnel for the releasing nascent RNA product. Interacts with the glycoprotein complex; this interaction plays a role in virion budding. Interacts with host eIF4E; this interaction results in eIF4E reduced affinity for its substrate, the 5'-m7 G cap structure. Interacts (via late-budding domain) with host TSG101; this interaction is essential for budding and release of viral particles. Interacts with host RPLP0; this interaction may serve to load ribosome-like particles inside the virion. Interacts with host PML; this interaction induces PML bodies redistribution in the cytoplasm upon viral infection. Myristoylation is required for the role of RING finger protein Z in assembly and budding.

Its subcellular location is the virion. It localises to the host cytoplasm. It is found in the host perinuclear region. The protein localises to the host cell membrane. In terms of biological role, plays a crucial role in virion assembly and budding. Expressed late in the virus life cycle, it acts as an inhibitor of viral transcription and RNA synthesis by interacting with the viral polymerase L. Presumably recruits the NP encapsidated genome to cellular membranes at budding sites via direct interaction with NP. Plays critical roles in the final steps of viral release by interacting with host TSG101, a member of the vacuolar protein-sorting pathway and using other cellular host proteins involved in vesicle formation pathway. The budding of the virus progeny occurs after association of protein Z with the viral glycoprotein complex SSP-GP1-GP2 at the cell periphery, step that requires myristoylation of protein Z. Also selectively represses protein production by associating with host eIF4E. In cell-based minigenome assay, has an inhibitory effect on the ribonucleoprotein machinery (vRNP), which is responsible for the replication and transcription of the viral genome. The sequence is that of RING finger protein Z from Guanarito mammarenavirus (isolate Human/Venezuela/NH-95551/1990) (GTOV).